A 426-amino-acid chain; its full sequence is Putative phosphate permease CPn_0680/CP_0067/CPj0680/CpB0707 (426 aa).

11 consecutive transmembrane segments (helical) span residues 1–21 (MLPL…NIGA), 42–62 (AVVI…DRVA), 87–107 (TAAL…GWPV), 112–132 (SIVG…IIYW), 137–157 (IILI…YLIF), 180–200 (FLAA…GVIL), 207–227 (WAVS…FYYV), 260–280 (LVVE…MAFA), 313–333 (LMAF…WRVI), 364–384 (ILGL…GIGL), and 399–419 (IVLS…LFFF).

This sequence belongs to the inorganic phosphate transporter (PiT) (TC 2.A.20) family.

The protein resides in the cell membrane. Functionally, potential transporter for phosphate. The polypeptide is Putative phosphate permease CPn_0680/CP_0067/CPj0680/CpB0707 (Chlamydia pneumoniae (Chlamydophila pneumoniae)).